Consider the following 172-residue polypeptide: Protein-export protein SecB (172 aa).

The protein belongs to the SecB family. As to quaternary structure, homotetramer, a dimer of dimers. One homotetramer interacts with 1 SecA dimer.

It is found in the cytoplasm. Its function is as follows. One of the proteins required for the normal export of preproteins out of the cell cytoplasm. It is a molecular chaperone that binds to a subset of precursor proteins, maintaining them in a translocation-competent state. It also specifically binds to its receptor SecA. This chain is Protein-export protein SecB, found in Xylella fastidiosa (strain 9a5c).